The sequence spans 181 residues: ADP-ribosylation factor 1 (181 aa).

Position 2 is an N-acetylglycine; alternate (Gly-2). Gly-2 carries N-myristoyl glycine; alternate lipidation. An important for the stable binding to the membranes region spans residues 3–16 (NIFANLFKGLFGKK). GTP is bound by residues 24–32 (GLDAAGKTT), 126–129 (NKQD), and Ala-160.

It belongs to the small GTPase superfamily. Arf family. As to quaternary structure, interacts (when activated) with GGA1, GGA2 and GGA3; the interaction is required for proper subcellular location of GGA1, GGA2 and GGA3. Interacts with ARHGAP21, ASAP2, GGA1, HERC1, PRKCABP, PIP5K1B, TMED2, PSCD2, TMED10 and GRIA2. Interacts with ARFGAP1, which hydrolyzes GTP and thus, regulates its function. Interacts with PI4KB in the Golgi complex. Interacts with NCS1/FREQ in the Golgi and at the plasma membrane. Interacts with PLEKHA3. Interacts with PLEKHA8; the interaction, together with phosphatidylinositol 4-phosphate binding, is required for FAPP2-mediated glucosylceramide transfer activity. Interacts (activated) with PICK1 (via PDZ domain); the interaction blocks Arp2/3 complex inhibition. Interacts with IQSEC1. Interacts with C9orf72.

It localises to the golgi apparatus membrane. Its subcellular location is the synapse. The protein resides in the synaptosome. It is found in the postsynaptic density. It catalyses the reaction GTP + H2O = GDP + phosphate + H(+). Its activity is regulated as follows. Alternates between an inactive GDP-bound form and an active GTP-bound form. Activated by guanine nucleotide-exchange factors (GEFs) and inactivated by GTPase-activating proteins (GAPs). Its function is as follows. Small GTPase involved in protein trafficking between different compartments. Modulates vesicle budding and uncoating within the Golgi complex. In its GTP-bound form, triggers the recruitment of coatomer proteins to the Golgi membrane. The hydrolysis of ARF1-bound GTP, which is mediated by ARFGAPs proteins, is required for dissociation of coat proteins from Golgi membranes and vesicles. The GTP-bound form interacts with PICK1 to limit PICK1-mediated inhibition of Arp2/3 complex activity; the function is linked to AMPA receptor (AMPAR) trafficking, regulation of synaptic plasticity of excitatory synapses and spine shrinkage during long-term depression (LTD). Plays a key role in the regulation of intestinal stem cells and gut microbiota, and is essential for maintaining intestinal homeostasis. Also plays a critical role in mast cell expansion but not in mast cell maturation by facilitating optimal mTORC1 activation. The sequence is that of ADP-ribosylation factor 1 (ARF1) from Bos taurus (Bovine).